We begin with the raw amino-acid sequence, 520 residues long: Putative lipase ATG15 (520 aa).

Over 1 to 14 (MLHKSPSRKRFASP) the chain is Cytoplasmic. Residues 15-35 (LHLGCILTLTVLCLIAYYFAL) form a helical; Signal-anchor for type II membrane protein membrane-spanning segment. Topologically, residues 36-520 (PDYLSVGKSS…WLGFCTKYEL (485 aa)) are lumenal. N-linked (GlcNAc...) asparagine glycans are attached at residues asparagine 173, asparagine 202, and asparagine 208. Serine 332 serves as the catalytic Charge relay system.

Belongs to the AB hydrolase superfamily. Lipase family. In terms of assembly, binds to both phosphatidylinositol (PI) and phosphatidylinositol 3,5-bisphosphate (PIP2). Glycosylated.

The protein localises to the endosome. The protein resides in the multivesicular body membrane. It localises to the prevacuolar compartment membrane. It carries out the reaction a triacylglycerol + H2O = a diacylglycerol + a fatty acid + H(+). Lipase which is essential for lysis of subvacuolar cytoplasm to vacuole targeted bodies and intravacuolar autophagic bodies. Involved in the lysis of intravacuolar multivesicular body (MVB) vesicles. The intravacuolar membrane disintegration by ATG15 is critical to life span extension. This chain is Putative lipase ATG15 (ATG15), found in Saccharomyces cerevisiae (strain ATCC 204508 / S288c) (Baker's yeast).